Reading from the N-terminus, the 128-residue chain is Group 2 truncated hemoglobin GlbO (128 aa).

Residues 23-36 constitute a cross-link (isodityrosine (Tyr-Tyr)); it reads YAQVAEDEVLRRVY. Residue tyrosine 36 is modified to 3',4'-dihydroxyphenylalanine. Residue histidine 75 coordinates heme.

It belongs to the truncated hemoglobin family. Group II subfamily. As to quaternary structure, homododecamer. It depends on heme as a cofactor. Post-translationally, contains L-DOPA (3',4'-dihydroxyphenylalanine).

This chain is Group 2 truncated hemoglobin GlbO (glbO), found in Mycobacterium bovis (strain ATCC BAA-935 / AF2122/97).